We begin with the raw amino-acid sequence, 116 residues long: Peptidyl-tRNA hydrolase (116 aa).

The protein belongs to the PTH2 family.

Its subcellular location is the cytoplasm. The catalysed reaction is an N-acyl-L-alpha-aminoacyl-tRNA + H2O = an N-acyl-L-amino acid + a tRNA + H(+). Functionally, the natural substrate for this enzyme may be peptidyl-tRNAs which drop off the ribosome during protein synthesis. This chain is Peptidyl-tRNA hydrolase, found in Methanococcus maripaludis (strain C7 / ATCC BAA-1331).